The chain runs to 849 residues: Leucine--tRNA ligase (849 aa).

The 'HIGH' region signature appears at 44–54 (PYPSGRIHMGH). The short motif at 620 to 624 (KMSKS) is the 'KMSKS' region element. Lysine 623 provides a ligand contact to ATP.

The protein belongs to the class-I aminoacyl-tRNA synthetase family.

It localises to the cytoplasm. It catalyses the reaction tRNA(Leu) + L-leucine + ATP = L-leucyl-tRNA(Leu) + AMP + diphosphate. The sequence is that of Leucine--tRNA ligase from Sphingopyxis alaskensis (strain DSM 13593 / LMG 18877 / RB2256) (Sphingomonas alaskensis).